We begin with the raw amino-acid sequence, 95 residues long: Co-chaperonin GroES (95 aa).

It belongs to the GroES chaperonin family. In terms of assembly, heptamer of 7 subunits arranged in a ring. Interacts with the chaperonin GroEL.

It is found in the cytoplasm. Functionally, together with the chaperonin GroEL, plays an essential role in assisting protein folding. The GroEL-GroES system forms a nano-cage that allows encapsulation of the non-native substrate proteins and provides a physical environment optimized to promote and accelerate protein folding. GroES binds to the apical surface of the GroEL ring, thereby capping the opening of the GroEL channel. The polypeptide is Co-chaperonin GroES (Syntrophotalea carbinolica (strain DSM 2380 / NBRC 103641 / GraBd1) (Pelobacter carbinolicus)).